An 87-amino-acid polypeptide reads, in one-letter code: Cell division topological specificity factor (87 aa).

Belongs to the MinE family.

Functionally, prevents the cell division inhibition by proteins MinC and MinD at internal division sites while permitting inhibition at polar sites. This ensures cell division at the proper site by restricting the formation of a division septum at the midpoint of the long axis of the cell. The protein is Cell division topological specificity factor of Neisseria gonorrhoeae (strain ATCC 700825 / FA 1090).